The following is a 336-amino-acid chain: Neuropeptides B/W receptor type 2 (336 aa).

The tract at residues 1-25 (MMEATGLEGLESTSSPCPGSTGTGL) is disordered. At 1–45 (MMEATGLEGLESTSSPCPGSTGTGLSWDNGTRHNATFPEPLPALY) the chain is on the extracellular side. Positions 12–25 (STSSPCPGSTGTGL) are enriched in low complexity. N29 and N34 each carry an N-linked (GlcNAc...) asparagine glycan. Residues 46–68 (VLLPVVYSVICAVGLVGNAAVIC) traverse the membrane as a helical segment. Topologically, residues 69–80 (VILRAPKMKTVT) are cytoplasmic. Residues 81-103 (HVFILNLAIADGLFTLVLPTNIA) traverse the membrane as a helical segment. Over 104–127 (EHLLQRWPFGEVLCKLVLAIDHCN) the chain is Extracellular. C117 and C197 are joined by a disulfide. A helical membrane pass occupies residues 128–146 (IFSSVYFLAAMSIDRYLVV). The Cytoplasmic portion of the chain corresponds to 147–165 (LATARSRRMPRRTVHRAKV). The chain crosses the membrane as a helical span at residues 166-188 (ASLCVWLGVTVAVLPFLTFAGVY). The Extracellular portion of the chain corresponds to 189–213 (NNELQVTSCGLSFPRPERAWFQASR). The chain crosses the membrane as a helical span at residues 214–236 (IYTLVLGFVVPMCTLCVLYADLL). Over 237–256 (RRLRALRLHSGAKALGKAKR) the chain is Cytoplasmic. The helical transmembrane segment at 257–279 (KVSLLVLAVLAVGLLCWTPFHLA) threads the bilayer. Over 280-293 (SIVALTTDLPQTPL) the chain is Extracellular. Residues 294–316 (VIIVSYVVTSLSYTSSCLNPFLY) form a helical membrane-spanning segment. Topologically, residues 317-336 (AFLDHSFRKSLRTACRCQGA) are cytoplasmic.

The protein belongs to the G-protein coupled receptor 1 family.

It is found in the cell membrane. In terms of biological role, interacts specifically with a number of opioid ligands. Receptor for neuropeptides B and W, which may be involved in neuroendocrine system regulation, food intake and the organization of other signals. In Bos taurus (Bovine), this protein is Neuropeptides B/W receptor type 2 (NPBWR2).